Consider the following 134-residue polypeptide: Large ribosomal subunit protein uL22 (134 aa).

This sequence belongs to the universal ribosomal protein uL22 family. Part of the 50S ribosomal subunit.

Functionally, this protein binds specifically to 23S rRNA; its binding is stimulated by other ribosomal proteins, e.g. L4, L17, and L20. It is important during the early stages of 50S assembly. It makes multiple contacts with different domains of the 23S rRNA in the assembled 50S subunit and ribosome. In terms of biological role, the globular domain of the protein is located near the polypeptide exit tunnel on the outside of the subunit, while an extended beta-hairpin is found that lines the wall of the exit tunnel in the center of the 70S ribosome. This Gluconacetobacter diazotrophicus (strain ATCC 49037 / DSM 5601 / CCUG 37298 / CIP 103539 / LMG 7603 / PAl5) protein is Large ribosomal subunit protein uL22.